Reading from the N-terminus, the 319-residue chain is HPr kinase/phosphorylase (319 aa).

Residues H137 and K158 contribute to the active site. Position 152 to 159 (152 to 159 (GDSGVGKS)) interacts with ATP. A Mg(2+)-binding site is contributed by S159. The active-site Proton acceptor; for phosphorylation activity. Proton donor; for dephosphorylation activity is the D176. Residues 201 to 210 (MEIRGLGIIN) form an important for the catalytic mechanism of both phosphorylation and dephosphorylation region. Residue E202 participates in Mg(2+) binding. Residue R243 is part of the active site. Residues 264-269 (PVRPGR) form an important for the catalytic mechanism of dephosphorylation region.

This sequence belongs to the HPrK/P family. Homohexamer. Mg(2+) serves as cofactor.

The enzyme catalyses [HPr protein]-L-serine + ATP = [HPr protein]-O-phospho-L-serine + ADP + H(+). The catalysed reaction is [HPr protein]-O-phospho-L-serine + phosphate + H(+) = [HPr protein]-L-serine + diphosphate. Catalyzes the ATP- as well as the pyrophosphate-dependent phosphorylation of a specific serine residue in HPr, a phosphocarrier protein of the phosphoenolpyruvate-dependent sugar phosphotransferase system (PTS). HprK/P also catalyzes the pyrophosphate-producing, inorganic phosphate-dependent dephosphorylation (phosphorolysis) of seryl-phosphorylated HPr (P-Ser-HPr). The polypeptide is HPr kinase/phosphorylase (Treponema pallidum subsp. pallidum (strain SS14)).